A 195-amino-acid chain; its full sequence is Cyclin-dependent kinase inhibitor 7 (195 aa).

Positions 1 to 11 are enriched in basic and acidic residues; that stretch reads MSETKPKRDSE. 3 disordered regions span residues 1–50, 61–80, and 117–154; these read MSET…SVSD, EEED…SSET, and SSEN…TQAE. Low complexity-rich tracts occupy residues 37-50 and 68-80; these read SSSS…SVSD and SSSI…SSET. Thr-151 is subject to Phosphothreonine; by KIN10.

The protein belongs to the CDI family. ICK/KRP subfamily. In terms of assembly, specifically interacts with CDKA-1, but not with CDKB1-1. Interacts with CYCD4-1. Binds to FBL17. Ubiquitinated by SCF(FBL17). Ubiquitination leads to its subsequent degradation, thus controlling cell cycle progression. As to expression, expressed in flowers, in developing pollen, and at lower levels in roots and leaves.

The protein localises to the nucleus. Its subcellular location is the nucleoplasm. Its function is as follows. Binds and inhibits CYCD2-1/CDKA-1 complex kinase activity. May target specifically CDKA-1. The chain is Cyclin-dependent kinase inhibitor 7 (KRP7) from Arabidopsis thaliana (Mouse-ear cress).